The primary structure comprises 1197 residues: Envelopment polyprotein (1197 aa).

The first 16 residues, 1-16 (MYVLLTILTSVLVCEA), serve as a signal peptide directing secretion. Residues 17 to 130 (IIRVSLSSTR…RDAKQIGRKT (114 aa)) are Cytoplasmic-facing. The internal signal sequence for glycoprotein N stretch occupies residues 131-153 (MAGIAMTVLPALAVFALAPVVFA). Over 154-582 (EDPHLRNRPG…GLINYQCHTA (429 aa)) the chain is Lumenal. 12 disulfide bridges follow: Cys179–Cys188, Cys229–Cys239, Cys250–Cys281, Cys271–Cys284, Cys304–Cys456, Cys322–Cys332, Cys374–Cys434, Cys402–Cys413, Cys420–Cys425, Cys479–Cys482, Cys486–Cys556, and Cys506–Cys511. The chain crosses the membrane as a helical span at residues 583–603 (LSAFVVVFVFSSIAIICLAIL). Residues 604–673 (YRVLKCLKIA…APIPRHAPIP (70 aa)) are Cytoplasmic-facing. Residues 608-650 (KCLKIAPRKVLNPLMWITAFIRWIYKKMVARVADNINQVNREI) form a golgi retention signal region. Residues 646 to 650 (VNREI) form an important for correct targeting of the glycoproteins to the Golgi complex but not for heterodimerization region. Residues 675–690 (YSTYLMLLLIVSYASA) form an internal signal sequence for glycoprotein C region. 12 cysteine pairs are disulfide-bonded: Cys691/Cys731, Cys704/Cys713, Cys756/Cys852, Cys771/Cys965, Cys777/Cys825, Cys783/Cys832, Cys788/Cys814, Cys818/Cys823, Cys934/Cys947, Cys1029/Cys1101, Cys1039/Cys1042, and Cys1049/Cys1083. Over 691–1159 (CSELIQASSR…MSWFGGPLKT (469 aa)) the chain is Lumenal. The fusion loop stretch occupies residues 777–783 (CHLVGEC). Asn794 carries N-linked (GlcNAc...) asparagine; by host glycosylation. The tract at residues 819–830 (GGWGCGCFNVNP) is fusion loop. Asn1035 carries an N-linked (GlcNAc...) asparagine; by host glycan. Asn1077 is a glycosylation site (N-linked (GlcNAc...) asparagine; by host). A helical membrane pass occupies residues 1160–1180 (ILLICLYVALSIGLFFLLIYL). Residues 1181-1197 (GGTGLSKMWLAATKKAS) are Cytoplasmic-facing.

Belongs to the phlebovirus envelope glycoprotein family. As to quaternary structure, heterodimer with glycoprotein C. Homotrimer (postfusion). Interacts with nucleocapsid protein N and with the polymerase L in order to package them into virus particles. Interacts with host E3 ubiquitin-protein ligase UBR4; this interaction is important for viral RNA production. Interacts with host LRP1; this interaction facilitates virus entry into the host cell. In terms of assembly, heterodimer with glycoprotein C. Specific enzymatic cleavages in vivo yield mature proteins including NSm protein, Glycoprotein C, and Glycoprotein N. Post-translationally, glycosylated. The glycans can attach to host CD209/DC-SIGN, and may play a role in virus entry into dendritic cells. In terms of processing, palmitoylated.

Its subcellular location is the virion membrane. The protein localises to the host Golgi apparatus membrane. It localises to the host endoplasmic reticulum membrane. The protein resides in the host mitochondrion outer membrane. It is found in the host Golgi apparatus. Its subcellular location is the virion. Functionally, structural component of the virion that interacts with glycoprotein C. It shields the hydrophobic fusion loops of the glycoprotein C, preventing premature fusion. The glycoprotein protrusions are arranged on an icosahedral lattice, with T=12 triangulation. They are able to attach the virion to the host cell receptor CD209/DC-SIGN and to promote fusion of membranes with the late endosome after endocytosis of the virion. Plays a role in the packaging of ribonucleoproteins and polymerase during virus assembly. In terms of biological role, structural component of the virion that interacts with glycoprotein N. Acts as a class II fusion protein that is activated upon acidification and subsequent repositioning of the glycoprotein N. The glycoprotein protrusions are arranged on an icosahedral lattice, with T=12 triangulation. They are able to attach the virion to the host cell receptor CD209/DC-SIGN and to promote fusion of membranes with the late endosome after endocytosis of the virion. Its function is as follows. Plays a role in the inhibition of virus-induced apoptosis. Plays a role for virus dissemination in vertebrates. Plays a role for virus dissemination in mosquitoes. May act as a structural virion protein in insects. The protein is Envelopment polyprotein (GP) of Rift valley fever virus (strain ZH-548 M12) (RVFV).